We begin with the raw amino-acid sequence, 359 residues long: tRNA-specific 2-thiouridylase MnmA (359 aa).

Residues 9-16 (GISGGVDS) and Met-35 each bind ATP. The tract at residues 95–97 (NPD) is interaction with target base in tRNA. Residue Cys-100 is the Nucleophile of the active site. Cys-100 and Cys-197 are joined by a disulfide. Gly-124 is an ATP binding site. The segment at 147-149 (KDQ) is interaction with tRNA. Cys-197 acts as the Cysteine persulfide intermediate in catalysis. The segment at 309-310 (RY) is interaction with tRNA.

Belongs to the MnmA/TRMU family.

Its subcellular location is the cytoplasm. It carries out the reaction S-sulfanyl-L-cysteinyl-[protein] + uridine(34) in tRNA + AH2 + ATP = 2-thiouridine(34) in tRNA + L-cysteinyl-[protein] + A + AMP + diphosphate + H(+). Its function is as follows. Catalyzes the 2-thiolation of uridine at the wobble position (U34) of tRNA, leading to the formation of s(2)U34. This chain is tRNA-specific 2-thiouridylase MnmA, found in Francisella tularensis subsp. tularensis (strain WY96-3418).